The chain runs to 177 residues: MSGYPAEGEIIQIHSYKHNGLIHRVWEESIVLKGTSTCIIGANDKTMVTEADGRTWVTREPAICFFHAKHWFNIIGMIREEGIYYYCNLSSPFVWDEEALKYIDYDLDIKVFPDMTYILLDEDEYERHRKEMNYPDVIDRILKNNVKKLISWIHERKGPFAPDFIDKWYEKFLSYRK.

Arg-24 (proton donor) is an active-site residue. 6 residues coordinate Mg(2+): Asn-88, Asp-104, Asp-106, Asp-108, Asp-121, and Glu-124.

Belongs to the Ntdp family. Mg(2+) is required as a cofactor.

It carries out the reaction a ribonucleoside 5'-triphosphate + H2O = a ribonucleoside 5'-diphosphate + phosphate + H(+). The catalysed reaction is a ribonucleoside 5'-diphosphate + H2O = a ribonucleoside 5'-phosphate + phosphate + H(+). Has nucleoside phosphatase activity towards nucleoside triphosphates and nucleoside diphosphates. The polypeptide is Nucleoside triphosphate/diphosphate phosphatase (Geobacillus sp. (strain WCH70)).